We begin with the raw amino-acid sequence, 569 residues long: Laccase-6 (569 aa).

A signal peptide spans 1–29; sequence MTSSAVPSLFRLSFLLFTLQVMNIGRIGA. Plastocyanin-like domains follow at residues 37 to 153 and 163 to 315; these read KVQT…PKAS and NEHT…YIGA. N83 carries an N-linked (GlcNAc...) asparagine glycan. Cu cation contacts are provided by H87, H89, H132, and H134. 6 N-linked (GlcNAc...) asparagine glycosylation sites follow: N208, N303, N319, N392, N438, and N444. The Plastocyanin-like 3 domain occupies 417–553; that stretch reads DFPTTPEKAY…STMFIVKNGK (137 aa). H472, H475, H477, H532, C533, H534, H538, and M543 together coordinate Cu cation.

It belongs to the multicopper oxidase family. It depends on Cu cation as a cofactor. As to expression, predominantly expressed in the inflorescence stem, but not in siliques.

The protein localises to the secreted. It is found in the extracellular space. It localises to the apoplast. The enzyme catalyses 4 hydroquinone + O2 = 4 benzosemiquinone + 2 H2O. In terms of biological role, lignin degradation and detoxification of lignin-derived products. The sequence is that of Laccase-6 (LAC6) from Arabidopsis thaliana (Mouse-ear cress).